Here is a 149-residue protein sequence, read N- to C-terminus: Putative prefoldin subunit alpha (149 aa).

This sequence belongs to the prefoldin subunit alpha family.

Its subcellular location is the cytoplasm. Its function is as follows. Molecular chaperone capable of stabilizing a range of proteins. The polypeptide is Putative prefoldin subunit alpha (Aquifex aeolicus (strain VF5)).